The sequence spans 253 residues: 5'-nucleotidase SurE (253 aa).

A divalent metal cation is bound by residues Asp-8, Asp-9, Ser-39, and Asn-95.

Belongs to the SurE nucleotidase family. The cofactor is a divalent metal cation.

It localises to the cytoplasm. It carries out the reaction a ribonucleoside 5'-phosphate + H2O = a ribonucleoside + phosphate. Nucleotidase that shows phosphatase activity on nucleoside 5'-monophosphates. This is 5'-nucleotidase SurE from Desulfatibacillum aliphaticivorans.